The primary structure comprises 508 residues: Photosystem II CP47 reaction center protein (508 aa).

6 helical membrane passes run S21–S36, I101–W115, G140–F156, I203–S218, V237–V252, and S457–R472.

It belongs to the PsbB/PsbC family. PsbB subfamily. As to quaternary structure, PSII is composed of 1 copy each of membrane proteins PsbA, PsbB, PsbC, PsbD, PsbE, PsbF, PsbH, PsbI, PsbJ, PsbK, PsbL, PsbM, PsbT, PsbX, PsbY, PsbZ, Psb30/Ycf12, at least 3 peripheral proteins of the oxygen-evolving complex and a large number of cofactors. It forms dimeric complexes. The cofactor is Binds multiple chlorophylls. PSII binds additional chlorophylls, carotenoids and specific lipids..

It localises to the plastid. Its subcellular location is the chloroplast thylakoid membrane. Its function is as follows. One of the components of the core complex of photosystem II (PSII). It binds chlorophyll and helps catalyze the primary light-induced photochemical processes of PSII. PSII is a light-driven water:plastoquinone oxidoreductase, using light energy to abstract electrons from H(2)O, generating O(2) and a proton gradient subsequently used for ATP formation. This chain is Photosystem II CP47 reaction center protein, found in Atropa belladonna (Belladonna).